Consider the following 395-residue polypeptide: Beta-1,4-galactosyltransferase 3 (395 aa).

Over 1-10 (MLRRLLERPC) the chain is Cytoplasmic. The chain crosses the membrane as a helical; Signal-anchor for type II membrane protein span at residues 11 to 31 (TLALLVGSQLAVMMYLSLGGF). Over 32–395 (RSLSALFGRD…ANHTAPRGSH (364 aa)) the chain is Lumenal. The N-linked (GlcNAc...) asparagine glycan is linked to Asn57. Cys79 and Cys121 are disulfide-bonded. UDP-alpha-D-galactose is bound at residue 132 to 136 (PHRAR). An N-linked (GlcNAc...) asparagine glycan is attached at Asn168. Residues 171–173 (FNR), 198–199 (VD), Tyr228, and Trp260 each bind UDP-alpha-D-galactose. The cysteines at positions 192 and 211 are disulfide-linked. Asp199 serves as a coordination point for Mn(2+). 262 to 265 (GEDD) is an N-acetyl-D-glucosamine binding site. Residue His293 participates in Mn(2+) binding. Residue 293-295 (HRG) coordinates UDP-alpha-D-galactose. Position 305 (Arg305) interacts with N-acetyl-D-glucosamine. N-linked (GlcNAc...) asparagine glycosylation occurs at Asn339. The tract at residues 340–395 (ITADIGTDPRGPRSPSGPRYPPGSSQAFRQEMLQRRPPARPGPLPTANHTAPRGSH) is disordered. Residues 352–364 (RSPSGPRYPPGSS) are compositionally biased toward low complexity. The N-linked (GlcNAc...) asparagine glycan is linked to Asn387.

It belongs to the glycosyltransferase 7 family. Mn(2+) is required as a cofactor.

Its subcellular location is the golgi apparatus. The protein localises to the golgi stack membrane. The enzyme catalyses an N-acetyl-beta-D-glucosaminyl derivative + UDP-alpha-D-galactose = a beta-D-galactosyl-(1-&gt;4)-N-acetyl-beta-D-glucosaminyl derivative + UDP + H(+). The catalysed reaction is N-acetyl-D-glucosamine + UDP-alpha-D-galactose = beta-D-galactosyl-(1-&gt;4)-N-acetyl-D-glucosamine + UDP + H(+). It carries out the reaction a beta-D-GlcNAc-(1-&gt;3)-beta-D-Gal-(1-&gt;4)-beta-D-Glc-(1&lt;-&gt;1)-Cer(d18:1(4E)) + UDP-alpha-D-galactose = a neolactoside nLc4Cer(d18:1(4E)) + UDP + H(+). It catalyses the reaction a beta-D-glucosylceramide + UDP-alpha-D-galactose = a beta-D-galactosyl-(1-&gt;4)-beta-D-glucosyl-(1&lt;-&gt;1)-ceramide + UDP + H(+). The enzyme catalyses a neolactoside IV(3)-beta-GlcNAc-nLc4Cer + UDP-alpha-D-galactose = a neolactoside nLc6Cer + UDP + H(+). It functions in the pathway protein modification; protein glycosylation. Its function is as follows. Responsible for the synthesis of complex-type N-linked oligosaccharides in many glycoproteins as well as the carbohydrate moieties of glycolipids. The polypeptide is Beta-1,4-galactosyltransferase 3 (Mus musculus (Mouse)).